Reading from the N-terminus, the 757-residue chain is RNA-directed RNA polymerase catalytic subunit (757 aa).

The interval 52–82 (KGKWTTNTETGAPQLNPIDGPLPEDNEPSGY) is disordered. Positions 55–64 (WTTNTETGAP) are enriched in polar residues. Short sequence motifs (nuclear localization signal) lie at residues 187 to 195 (RKRRVRDNM) and 203 to 216 (RTIG…NKKS). Residues 249–256 (RGFVYFVE) form a promoter-binding site region. A RdRp catalytic domain is found at 286–483 (VRKMMTNSQD…GINMSKKKSY (198 aa)).

The protein belongs to the influenza viruses polymerase PB1 family. As to quaternary structure, influenza RNA polymerase is composed of three subunits: PB1, PB2 and PA. Interacts (via N-terminus) with PA (via C-terminus). Interacts (via C-terminus) with PB2 (via N-terminus); this interaction is essential for transcription initiation. Post-translationally, phosphorylated by host PRKCA.

The protein localises to the host nucleus. The protein resides in the host cytoplasm. The enzyme catalyses RNA(n) + a ribonucleoside 5'-triphosphate = RNA(n+1) + diphosphate. Its function is as follows. RNA-dependent RNA polymerase which is responsible for replication and transcription of virus RNA segments. The transcription of viral mRNAs occurs by a unique mechanism called cap-snatching. 5' methylated caps of cellular mRNAs are cleaved after 10-13 nucleotides by PA. In turn, these short capped RNAs are used as primers by PB1 for transcription of viral mRNAs. During virus replication, PB1 initiates RNA synthesis and copy vRNA into complementary RNA (cRNA) which in turn serves as a template for the production of more vRNAs. The chain is RNA-directed RNA polymerase catalytic subunit from Aves (Cat).